Here is a 344-residue protein sequence, read N- to C-terminus: Dihydroorotate dehydrogenase (quinone) (344 aa).

Residues 65–69 and Thr-89 each bind FMN; that span reads AGLDK. Residue Lys-69 participates in substrate binding. 114-118 lines the substrate pocket; the sequence is NRMGF. 2 residues coordinate FMN: Asn-145 and Asn-178. Position 178 (Asn-178) interacts with substrate. The active-site Nucleophile is the Ser-181. Substrate is bound at residue Asn-183. Residues Lys-223 and Thr-251 each contribute to the FMN site. 252–253 contacts substrate; sequence NT. FMN-binding positions include Gly-274, Gly-303, and 324–325; that span reads YT.

Belongs to the dihydroorotate dehydrogenase family. Type 2 subfamily. In terms of assembly, monomer. Requires FMN as cofactor.

The protein localises to the cell membrane. The enzyme catalyses (S)-dihydroorotate + a quinone = orotate + a quinol. It participates in pyrimidine metabolism; UMP biosynthesis via de novo pathway; orotate from (S)-dihydroorotate (quinone route): step 1/1. Functionally, catalyzes the conversion of dihydroorotate to orotate with quinone as electron acceptor. In Ralstonia nicotianae (strain ATCC BAA-1114 / GMI1000) (Ralstonia solanacearum), this protein is Dihydroorotate dehydrogenase (quinone).